We begin with the raw amino-acid sequence, 307 residues long: Thymidylate synthase (307 aa).

DUMP is bound at residue Arg-44. Position 108 is a phosphoserine (Ser-108). Residues Arg-169 to Arg-170, Cys-189 to His-190, Arg-209 to Asp-212, Asn-220, and His-250 to Tyr-252 each bind dUMP. Cys-189 acts as the Nucleophile in catalysis. A (6R)-5,10-methylene-5,6,7,8-tetrahydrofolate-binding site is contributed by Asp-212. Glycyl lysine isopeptide (Lys-Gly) (interchain with G-Cter in SUMO2) cross-links involve residues Lys-286 and Lys-302. Ala-306 provides a ligand contact to (6R)-5,10-methylene-5,6,7,8-tetrahydrofolate.

Belongs to the thymidylate synthase family. Homodimer.

The protein resides in the nucleus. It localises to the cytoplasm. Its subcellular location is the mitochondrion. It is found in the mitochondrion matrix. The protein localises to the mitochondrion inner membrane. The catalysed reaction is dUMP + (6R)-5,10-methylene-5,6,7,8-tetrahydrofolate = 7,8-dihydrofolate + dTMP. It participates in pyrimidine metabolism; dTTP biosynthesis. Catalyzes the reductive methylation of 2'-deoxyuridine 5'-monophosphate (dUMP) to thymidine 5'-monophosphate (dTMP), using the cosubstrate, 5,10- methylenetetrahydrofolate (CH2H4folate) as a 1-carbon donor and reductant and contributes to the de novo mitochondrial thymidylate biosynthesis pathway. This Mus musculus (Mouse) protein is Thymidylate synthase (Tyms).